The primary structure comprises 1340 residues: Early transcription factor large subunit homolog (1340 aa).

The protein belongs to the asfivirus G1340L family.

Its subcellular location is the virion. Functionally, putative initation factor. This is Early transcription factor large subunit homolog from African swine fever virus (strain Badajoz 1971 Vero-adapted) (Ba71V).